Reading from the N-terminus, the 816-residue chain is Pentatricopeptide repeat-containing protein At5g12100, mitochondrial (816 aa).

The N-terminal 39 residues, 1-39 (MVTRLRLVSRSSRYATVKFTDSVSACSCRRLFSASTDPE), are a transit peptide targeting the mitochondrion. The interval 34–57 (ASTDPEPESQPEQAPPTNPVTGDE) is disordered. PPR repeat units lie at residues 108-142 (HDFSYLLLSVLLNESKMISEAADLFFALRNEGIYP), 143-177 (SSDSLTLLLDHLVKTKQFRVTINVFLNILESDFRP), 178-212 (SKFMYGKAIQAAVKLSDVGKGLELFNRMKHDRIYP), 213-247 (SVFIYNVLIDGLCKGKRMNDAEQLFDEMLARRLLP), 248-282 (SLITYNTLIDGYCKAGNPEKSFKVRERMKADHIEP), 283-317 (SLITFNTLLKGLFKAGMVEDAENVLKEMKDLGFVP), 318-352 (DAFTFSILFDGYSSNEKAEAALGVYETAVDSGVKM), 353-387 (NAYTCSILLNALCKEGKIEKAEEILGREMAKGLVP), 388-422 (NEVIYNTMIDGYCRKGDLVGARMKIEAMEKQGMKP), 423-457 (DHLAYNCLIRRFCELGEMENAEKEVNKMKLKGVSP), 458-492 (SVETYNILIGGYGRKYEFDKCFDILKEMEDNGTMP), 493-527 (NVVSYGTLINCLCKGSKLLEAQIVKRDMEDRGVSP), 528-562 (KVRIYNMLIDGCCSKGKIEDAFRFSKEMLKKGIEL), 563-597 (NLVTYNTLIDGLSMTGKLSEAEDLLLEISRKGLKP), 598-632 (DVFTYNSLISGYGFAGNVQRCIALYEEMKRSGIKP), 633-662 (TLKTYHLLISLCTKEGIELTERLFGEMSLK), 664-698 (DLLVYNGVLHCYAVHGDMEKAFNLQKQMIEKSIGL), 699-733 (DKTTYNSLILGQLKVGKLCEVRSLIDEMNAREMEP), 734-768 (EADTYNIIVKGHCEVKDYMSAYVWYREMQEKGFLL), and 769-803 (DVCIGNELVSGLKEEWRSKEAEIVISEMNGRMLGD).

This sequence belongs to the PPR family. P subfamily.

It is found in the mitochondrion. The sequence is that of Pentatricopeptide repeat-containing protein At5g12100, mitochondrial from Arabidopsis thaliana (Mouse-ear cress).